The sequence spans 487 residues: 2-succinylbenzoate--CoA ligase (487 aa).

This sequence belongs to the ATP-dependent AMP-binding enzyme family. MenE subfamily.

The enzyme catalyses 2-succinylbenzoate + ATP + CoA = 2-succinylbenzoyl-CoA + AMP + diphosphate. It functions in the pathway quinol/quinone metabolism; 1,4-dihydroxy-2-naphthoate biosynthesis; 1,4-dihydroxy-2-naphthoate from chorismate: step 5/7. The protein operates within quinol/quinone metabolism; menaquinone biosynthesis. In terms of biological role, converts 2-succinylbenzoate (OSB) to 2-succinylbenzoyl-CoA (OSB-CoA). The chain is 2-succinylbenzoate--CoA ligase from Bacillus velezensis (strain DSM 23117 / BGSC 10A6 / LMG 26770 / FZB42) (Bacillus amyloliquefaciens subsp. plantarum).